We begin with the raw amino-acid sequence, 297 residues long: ATP synthase gamma chain (297 aa).

The protein belongs to the ATPase gamma chain family. As to quaternary structure, F-type ATPases have 2 components, CF(1) - the catalytic core - and CF(0) - the membrane proton channel. CF(1) has five subunits: alpha(3), beta(3), gamma(1), delta(1), epsilon(1). CF(0) has three main subunits: a, b and c.

The protein localises to the cell membrane. Produces ATP from ADP in the presence of a proton gradient across the membrane. The gamma chain is believed to be important in regulating ATPase activity and the flow of protons through the CF(0) complex. The chain is ATP synthase gamma chain from Micrococcus luteus (strain ATCC 4698 / DSM 20030 / JCM 1464 / CCM 169 / CCUG 5858 / IAM 1056 / NBRC 3333 / NCIMB 9278 / NCTC 2665 / VKM Ac-2230) (Micrococcus lysodeikticus).